The primary structure comprises 559 residues: MVLAAVLSMLRYVGGSDDRDFVDRLHSYFTCNLLIGLAVLVSFKQFGGKPVECLVPDIFSSSWEQYAENYCWASDTYYVPTNEPVAGLQSDEKRQRKISYYQWVPFFLLLEAACFRLPSLLWKYLAGHSGIKINEIVKLSSDPNNIKPDIKRANIKSLTVHLQGALRFHRRLQKKQIRPHRFLWLFNLPYSAFFVTAMYLCTKFFYLANVCLQLMFMNRFLETDKYKWYGMGALVDLLNGTTWEQSGMFPRVSLCDFDVRVMGNMQEHTIQCVLVINIFNEKIFILLWFWYLALLVFTFGSFFYWLLVSLWRHLNVRFIIRHLEMSDIAFDSSEDGAQEKVNRFISNYLKSDGVFVIRMMTLQSGVIFGTDLVQELWRNFHGSEPQLKRSNSAPKIEEREQWWPAYPSLVNPINPWRYRDENQANALRWRRALGANVDNSIATQDLMEKLLPQNAHMRPSDDELLNRQPIAVQASYIDDESDGKLKNEEKQNQQNATQPPYCYTNQNPTPYQNQNQIQNQNQYSNYYRTPSLSRGTDSRPVSTATDTDQTKKQSMSTFK.

The next 4 helical transmembrane spans lie at 28-48, 102-122, 182-202, and 283-303; these read YFTC…QFGG, QWVP…SLLW, FLWL…YLCT, and IFIL…GSFF. 2 disordered regions span residues 488–514 and 527–559; these read EEKQ…YQNQ and YRTP…STFK. The segment covering 503–514 has biased composition (low complexity); the sequence is YTNQNPTPYQNQ. The segment covering 528–559 has biased composition (polar residues); sequence RTPSLSRGTDSRPVSTATDTDQTKKQSMSTFK.

Belongs to the pannexin family.

It localises to the cell membrane. The protein resides in the cell junction. It is found in the gap junction. Structural component of the gap junctions. This is Innexin-10 (inx-10) from Caenorhabditis elegans.